The chain runs to 481 residues: Phosphoglucosamine mutase (481 aa).

Ser-128 serves as the catalytic Phosphoserine intermediate. Ser-128, Asp-269, Asp-271, and Asp-273 together coordinate Mg(2+). At Ser-128 the chain carries Phosphoserine.

The protein belongs to the phosphohexose mutase family. It depends on Mg(2+) as a cofactor. Post-translationally, activated by phosphorylation.

It carries out the reaction alpha-D-glucosamine 1-phosphate = D-glucosamine 6-phosphate. In terms of biological role, catalyzes the conversion of glucosamine-6-phosphate to glucosamine-1-phosphate. This is Phosphoglucosamine mutase from Synechocystis sp. (strain ATCC 27184 / PCC 6803 / Kazusa).